A 95-amino-acid chain; its full sequence is Putative small ubiquitin-related modifier 7 (95 aa).

One can recognise a Ubiquitin-like domain in the interval 13 to 90 (SHITIKIKSQ…IDAFVDQIAG (78 aa)). A Glycyl lysine isopeptide (Gly-Lys) (interchain with K-? in acceptor proteins) cross-link involves residue Gly-90.

This sequence belongs to the ubiquitin family. SUMO subfamily. Interacts with SAE2, SCE1, SIZ1 and MMS21 Covalently attached to a number of proteins.

Its subcellular location is the nucleus. It is found in the cytoplasm. Its function is as follows. Ubiquitin-like protein which can be covalently attached to target lysines as a monomer. Does not seem to be involved in protein degradation and may function as an antagonist of ubiquitin in the degradation process. The protein is Putative small ubiquitin-related modifier 7 (SUMO7) of Arabidopsis thaliana (Mouse-ear cress).